Here is a 327-residue protein sequence, read N- to C-terminus: MVLKSKNTKSKRTNKLELHPRNPHRARYDFALLADSCPELSGFIQLNQYGNESVDFANPNAVKTLNRALLNHFYGVAFWDIPPGYLCPPIPGRADYIHYLADLLAASNLGVIPRGKGVKVLDVGVGANCVYPIIGHQEYGWQFVGSDVNPVAVATCDTIVKSNPCLKGAISARLQTQSAKLFDGVWKEKDRFDLTLCNPPFHTSESAMIDESQRKWRGVKGKKTTTQKPVLNFGGTAAELWCDGGEAGFVSRMVKESVQYADRCFWFTSLVARQGNLDAIYRTLKDVGARQVKTIEMAQGQKISRFVAWSFLGDDQIDYWKDNYWQN.

Belongs to the methyltransferase superfamily. METTL16/RlmF family.

It is found in the cytoplasm. The catalysed reaction is adenosine(1618) in 23S rRNA + S-adenosyl-L-methionine = N(6)-methyladenosine(1618) in 23S rRNA + S-adenosyl-L-homocysteine + H(+). Specifically methylates the adenine in position 1618 of 23S rRNA. The sequence is that of Ribosomal RNA large subunit methyltransferase F from Marinomonas sp. (strain MWYL1).